The primary structure comprises 231 residues: Large ribosomal subunit protein uL3 (231 aa).

Gln-151 carries the N5-methylglutamine modification.

The protein belongs to the universal ribosomal protein uL3 family. As to quaternary structure, part of the 50S ribosomal subunit. Forms a cluster with proteins L14 and L19. In terms of processing, methylated by PrmB.

Its function is as follows. One of the primary rRNA binding proteins, it binds directly near the 3'-end of the 23S rRNA, where it nucleates assembly of the 50S subunit. The chain is Large ribosomal subunit protein uL3 from Granulibacter bethesdensis (strain ATCC BAA-1260 / CGDNIH1).